We begin with the raw amino-acid sequence, 375 residues long: UDP-4-amino-4,6-dideoxy-N-acetyl-beta-L-altrosamine transaminase (375 aa).

Substrate-binding positions include tyrosine 6, 26-29 (KQLT), alanine 56, and serine 178. N6-(pyridoxal phosphate)lysine is present on lysine 183. Substrate-binding positions include asparagine 228 and 313-316 (QVHY).

Belongs to the DegT/DnrJ/EryC1 family.

It catalyses the reaction UDP-4-amino-4,6-dideoxy-N-acetyl-beta-L-altrosamine + 2-oxoglutarate = UDP-2-acetamido-2,6-dideoxy-beta-L-arabino-hex-4-ulose + L-glutamate. Its function is as follows. Catalyzes the second step in the biosynthesis of pseudaminic acid, a sialic-acid-like sugar that is used to modify flagellin. Uses UDP-2-acetamido-2,6-dideoxy-beta-L-arabino-4-hexulose as substrate producing UDP-4-amino-4,6-dideoxy-beta-L-AltNAc. The sequence is that of UDP-4-amino-4,6-dideoxy-N-acetyl-beta-L-altrosamine transaminase (pseC) from Helicobacter pylori (strain ATCC 700392 / 26695) (Campylobacter pylori).